Reading from the N-terminus, the 501-residue chain is Aldehyde dehydrogenase 1A1 (501 aa).

Ser-2 carries the post-translational modification N-acetylserine. N6-acetyllysine is present on residues Lys-91 and Lys-128. NAD(+) is bound by residues 167–170, 193–196, 226–227, and 246–247; these read IPWN, KPAE, GP, and GS. Lys-252 bears the N6-acetyllysine mark. Catalysis depends on Glu-269, which acts as the Proton acceptor. NAD(+) is bound at residue 269–271; sequence ELG. The Nucleophile role is filled by Cys-303. A mediates interaction with PRMT3 region spans residues 336–501; that stretch reads LNSGINQGPQ…VAIKISQKNS (166 aa). Position 349–353 (349–353) interacts with NAD(+); that stretch reads EQHDK. An N6-acetyllysine mark is found at Lys-353 and Lys-367. 400–402 provides a ligand contact to NAD(+); that stretch reads EIF. Lys-410 carries the N6-acetyllysine modification. Residue Ser-413 is modified to Phosphoserine. N6-acetyllysine occurs at positions 419, 435, and 495.

It belongs to the aldehyde dehydrogenase family. As to quaternary structure, homotetramer. Interacts with PRMT3; the interaction is direct, inhibits ALDH1A1 aldehyde dehydrogenase activity and is independent of the methyltransferase activity of PRMT3. In terms of processing, the N-terminus is blocked most probably by acetylation.

It is found in the cytoplasm. The protein resides in the cytosol. The protein localises to the cell projection. Its subcellular location is the axon. It carries out the reaction an aldehyde + NAD(+) + H2O = a carboxylate + NADH + 2 H(+). It catalyses the reaction all-trans-retinal + NAD(+) + H2O = all-trans-retinoate + NADH + 2 H(+). The catalysed reaction is 9-cis-retinal + NAD(+) + H2O = 9-cis-retinoate + NADH + 2 H(+). The enzyme catalyses 11-cis-retinal + NAD(+) + H2O = 11-cis-retinoate + NADH + 2 H(+). It carries out the reaction 13-cis-retinal + NAD(+) + H2O = 13-cis-retinoate + NADH + 2 H(+). It catalyses the reaction 3-deoxyglucosone + NAD(+) + H2O = 2-dehydro-3-deoxy-D-gluconate + NADH + 2 H(+). The catalysed reaction is (E)-4-hydroxynon-2-enal + NAD(+) + H2O = (E)-4-hydroxynon-2-enoate + NADH + 2 H(+). The enzyme catalyses malonaldehyde + NAD(+) + H2O = 3-oxopropanoate + NADH + 2 H(+). It carries out the reaction hexanal + NAD(+) + H2O = hexanoate + NADH + 2 H(+). It catalyses the reaction propanal + NAD(+) + H2O = propanoate + NADH + 2 H(+). The catalysed reaction is acetaldehyde + NAD(+) + H2O = acetate + NADH + 2 H(+). The enzyme catalyses benzaldehyde + NAD(+) + H2O = benzoate + NADH + 2 H(+). It carries out the reaction 4-aminobutanal + NAD(+) + H2O = 4-aminobutanoate + NADH + 2 H(+). The protein operates within cofactor metabolism; retinol metabolism. In terms of biological role, cytosolic dehydrogenase that catalyzes the irreversible oxidation of a wide range of aldehydes to their corresponding carboxylic acid. Functions downstream of retinol dehydrogenases and catalyzes the oxidation of retinaldehyde into retinoic acid, the second step in the oxidation of retinol/vitamin A into retinoic acid. This pathway is crucial to control the levels of retinol and retinoic acid, two important molecules which excess can be teratogenic and cytotoxic. Also oxidizes aldehydes resulting from lipid peroxidation like (E)-4-hydroxynon-2-enal/HNE, malonaldehyde and hexanal that form protein adducts and are highly cytotoxic. By participating for instance to the clearance of (E)-4-hydroxynon-2-enal/HNE in the lens epithelium prevents the formation of HNE-protein adducts and lens opacification. Also functions downstream of fructosamine-3-kinase in the fructosamine degradation pathway by catalyzing the oxidation of 3-deoxyglucosone, the carbohydrate product of fructosamine 3-phosphate decomposition, which is itself a potent glycating agent that may react with lysine and arginine side-chains of proteins. Also has an aminobutyraldehyde dehydrogenase activity and is probably part of an alternative pathway for the biosynthesis of GABA/4-aminobutanoate in midbrain, thereby playing a role in GABAergic synaptic transmission. This Mesocricetus auratus (Golden hamster) protein is Aldehyde dehydrogenase 1A1.